The sequence spans 141 residues: Hemoglobin subunit alpha-D (141 aa).

Positions 1–141 (MLTAEDKKLI…VAAVLAEKYR (141 aa)) constitute a Globin domain. Histidine 58 and histidine 87 together coordinate heme b.

In terms of assembly, heterotetramer of two alpha-D chains and two beta chains. In terms of tissue distribution, red blood cells.

Its function is as follows. Involved in oxygen transport from the lung to the various peripheral tissues. This Aythya fuligula (Tufted duck) protein is Hemoglobin subunit alpha-D (HBAD).